Consider the following 301-residue polypeptide: Hydroxymycolate synthase MmaA4 (301 aa).

S-adenosyl-L-methionine contacts are provided by residues 42 to 43, 81 to 83, 103 to 108, 132 to 133, and isoleucine 145; these read YS, GCG, TLSKNQ, and WE. Cysteine 278 is a catalytic residue.

This sequence belongs to the CFA/CMAS family. As to quaternary structure, monomer.

Its pathway is lipid metabolism; mycolic acid biosynthesis. Involved in the biosynthesis of hydroxymycolate, a common precursor of oxygenated mycolic acids (methoxymycolate and ketomycolate). Probably transfers a methyl group from the S-adenosylmethionine (SAM) cofactor and, subsequently or simultaneously, a water molecule onto the double bound of ethylene substrates, leading to the formation of the hydroxylated product at the distal position. The protein is Hydroxymycolate synthase MmaA4 (cmaA) of Mycobacterium bovis (strain ATCC BAA-935 / AF2122/97).